A 491-amino-acid chain; its full sequence is MDNGSNQLHVLFLPYFATGHIIPLVNAARLFVFHAGVKVTILTTHHNASLFRSTIDNDVEDGHSVISIHTLRFPSTEVGLPEGIENFSSASSPELAGKVFYAIYLLQKPMEDKIREIHPDCIFSDMYLPWTVNIALELKIPRLLFNQSSYMYNSILYNLRLYKPHKSKTITSTDSISVPGLPDKIEFKLSQLTDDLIKPEDEKNAFDELLDRTRESEDRSYGIVHDTFYELEPAYADYYQKVKKTKCWQIGPISHFSSKLFRRKELINAVDESNSCAIVEWLNEQEHKSVLYVSFGSVVRFPEAQLTEIAKALEASSIPFIWVVKKDQSAETTCLLEEEKLKNKGLIIRGWAPQLTILDHSAVGGFMTHCGWNSILEAIIAGVPLVTWPVFAEQFYNEKLVEVMGLGVKVGAEVHESNGGVEISSLVIESEKIKEAIEKLMDDSKESQKIREKVIGMSEMAKNAVEEGGSSWNNLTALIDDIKNFTSTTNV.

The active-site Proton acceptor is H20. Position 20 (H20) interacts with an anthocyanidin. Residue D125 is the Charge relay of the active site. UDP-alpha-D-glucose contacts are provided by A352, Q354, H369, W372, N373, S374, and E377. A392 contacts an anthocyanidin. UDP-alpha-D-glucose contacts are provided by E393 and Q394.

The protein belongs to the UDP-glycosyltransferase family. Expressed in roots, stems and leaves.

The enzyme catalyses nuatigenin + UDP-alpha-D-glucose = nuatigenin 3-beta-D-glucopyranoside + UDP + H(+). It catalyses the reaction diosgenin + UDP-alpha-D-glucose = diosgenin 3-O-beta-D-glucoside + UDP + H(+). The catalysed reaction is tigogenin + UDP-alpha-D-glucose = tigogenin 3-O-beta-D-glucopyranoside + UDP + H(+). It carries out the reaction solasodine + UDP-alpha-D-glucose = solasodine 3-beta-D-glucoside + UDP + H(+). The enzyme catalyses solanidine + UDP-alpha-D-glucose = solanidine 3-O-beta-D-glucopyranoside + UDP + H(+). It catalyses the reaction tomatidine + UDP-alpha-D-glucose = tomatidine 3-O-beta-D-glucopyranoside + UDP + H(+). Its function is as follows. Glucosyltransferase involved in steroid saponin biosynthesis. Catalyzes the 3-O-glucosylation of steroidal sapogenins, such as diosgenin, nuatigenin and tigogenin. Can glucosylate steroidal alkaloids, such as solanidine, solasodine and tomatidine. In Solanum aculeatissimum (Dutch eggplant), this protein is Nuatigenin 3-beta-glucosyltransferase.